Here is a 186-residue protein sequence, read N- to C-terminus: Elongation factor P (186 aa).

This sequence belongs to the elongation factor P family.

Its subcellular location is the cytoplasm. Its pathway is protein biosynthesis; polypeptide chain elongation. Functionally, involved in peptide bond synthesis. Stimulates efficient translation and peptide-bond synthesis on native or reconstituted 70S ribosomes in vitro. Probably functions indirectly by altering the affinity of the ribosome for aminoacyl-tRNA, thus increasing their reactivity as acceptors for peptidyl transferase. The protein is Elongation factor P of Shewanella sp. (strain W3-18-1).